Here is a 215-residue protein sequence, read N- to C-terminus: Cytochrome b6 (215 aa).

Residues 32-52 (IFHCLGGITLTCFLVQVATGF) traverse the membrane as a helical segment. Heme c is bound at residue cysteine 35. Heme b is bound by residues histidine 86 and histidine 100. The next 3 membrane-spanning stretches (helical) occupy residues 90 to 110 (ASMM…TGGF), 116 to 136 (LTWV…VTGY), and 186 to 206 (LHTF…FPMI). Heme b contacts are provided by histidine 187 and histidine 202.

Belongs to the cytochrome b family. PetB subfamily. The 4 large subunits of the cytochrome b6-f complex are cytochrome b6, subunit IV (17 kDa polypeptide, PetD), cytochrome f and the Rieske protein, while the 4 small subunits are PetG, PetL, PetM and PetN. The complex functions as a dimer. Heme b is required as a cofactor. Requires heme c as cofactor.

Its subcellular location is the plastid. It is found in the chloroplast thylakoid membrane. Its function is as follows. Component of the cytochrome b6-f complex, which mediates electron transfer between photosystem II (PSII) and photosystem I (PSI), cyclic electron flow around PSI, and state transitions. This chain is Cytochrome b6, found in Calycanthus floridus var. glaucus (Eastern sweetshrub).